Here is a 139-residue protein sequence, read N- to C-terminus: MAPKAEKKPAEKKPVEEKAEKKPKAEKRVPGAKEGGGEKKGKKKAKKSVETYKIYIFKVLKQVHPDIGISSKAMSIMNSFINDIFEKLAQEAARLARYNKKPTITSREIQTSVRLVLPGELAKHAVSEGTKAVTKFTSS.

Over residues 1-39 (MAPKAEKKPAEKKPVEEKAEKKPKAEKRVPGAKEGGGEK) the composition is skewed to basic and acidic residues. A disordered region spans residues 1–47 (MAPKAEKKPAEKKPVEEKAEKKPKAEKRVPGAKEGGGEKKGKKKAKK). An N6-acetyllysine mark is found at Lys7 and Lys27. Lys135 participates in a covalent cross-link: Glycyl lysine isopeptide (Lys-Gly) (interchain with G-Cter in ubiquitin).

Belongs to the histone H2B family. The nucleosome is a histone octamer containing two molecules each of H2A, H2B, H3 and H4 assembled in one H3-H4 heterotetramer and two H2A-H2B heterodimers. The octamer wraps approximately 147 bp of DNA. Can be acetylated to form H2BK6ac and H2BK33ac. Post-translationally, monoubiquitinated by BRE1 to form H2BK143ub1 and deubiquitinated by UBP26. Required for heterochromatic histone H3 di- and trimethylation at H3K4me. May give a specific tag for epigenetic transcriptional activation.

The protein localises to the nucleus. Its subcellular location is the chromosome. Functionally, core component of nucleosome. Nucleosomes wrap and compact DNA into chromatin, limiting DNA accessibility to the cellular machineries which require DNA as a template. Histones thereby play a central role in transcription regulation, DNA repair, DNA replication and chromosomal stability. DNA accessibility is regulated via a complex set of post-translational modifications of histones, also called histone code, and nucleosome remodeling. The sequence is that of Histone H2B.11 (H2B.11) from Oryza sativa subsp. indica (Rice).